The sequence spans 543 residues: Adenosine deaminase 2 (543 aa).

A signal peptide spans 1–26 (MFLKFKNIFFIVLTLSIVFNGLIVNS). The segment covering 31–54 (INNKNNNNNNNNKDLSSSESGSSS) has biased composition (low complexity). The interval 31-58 (INNKNNNNNNNNKDLSSSESGSSSDINP) is disordered. Residue Asn126 is glycosylated (N-linked (GlcNAc...) asparagine). Zn(2+) contacts are provided by His144 and His146. Asn179 is a glycosylation site (N-linked (GlcNAc...) asparagine). 232-239 (WRKFDGIF) contacts substrate. N-linked (GlcNAc...) asparagine glycosylation is found at Asn309 and Asn326. Residue Gly355 participates in substrate binding. Position 389 (His389) interacts with Zn(2+). Catalysis depends on Glu392, which acts as the Proton donor. Residue Asn397 is glycosylated (N-linked (GlcNAc...) asparagine). His414 (proton acceptor) is an active-site residue. Asp471 contributes to the Zn(2+) binding site. Asp472 is a substrate binding site. Residues Asn508 and Asn514 are each glycosylated (N-linked (GlcNAc...) asparagine).

The protein belongs to the metallo-dependent hydrolases superfamily. Adenosine and AMP deaminases family. ADGF subfamily. The cofactor is Zn(2+).

It localises to the secreted. The catalysed reaction is adenosine + H2O + H(+) = inosine + NH4(+). Functionally, adenosine deaminase that may contribute to the degradation of extracellular adenosine, a signaling molecule that controls a variety of cellular responses. May play a role in the regulation of cell proliferation. In Dictyostelium discoideum (Social amoeba), this protein is Adenosine deaminase 2.